The chain runs to 421 residues: Hydrolyase poxO (421 aa).

Residue Ser239 is the Nucleophile of the active site.

Belongs to the AB hydrolase superfamily. FUS2 hydrolase family. In terms of assembly, homodimer.

The protein operates within secondary metabolite biosynthesis. Functionally, hydrolyase; part of the gene cluster that mediates the biosynthesis of oxaleimides, cytotoxic compounds containing an unusual disubstituted succinimide moiety. The first step of the pathway is provided by the HR-PKS poxF that serves in a new mode of collaborative biosynthesis with the PKS-NRPS poxE, by providing the olefin containing amino acid substrate via the synthesis of an ACP-bound dec-4-enoate. The cytochrome P450 monooxygenase poxM-catalyzed oxidation at the alpha-position creates the enzyme-bound 2-hydroxydec-4-enoyl-ACP thioester, which may be prone to spontaneous hydrolysis to yield 2-hydroxydec-4-enoic acid due to increased electrophilicity of the carbonyl. 2-hydroxydec-4-enoic acid can then be further oxidized by poxM to yield the alpha-ketoacid 2-oxodec-4-enoicacid, which is reductively aminated by the aminotransferase poxL to yield (S,E)-2-aminodec-4-enoic acid. The Hybrid PKS-NRPS synthetase poxE then performs condensation between the octaketide product of its PKS modules and the amino group of (S,E)-2-aminodec-4-enoic acid which is activated and incorporated by the adenylation domain. The resulting aminoacyl product can be cyclized by the Diels-Alderase PoxQ and reductively released by the reductive (R) domain of poxE to yield an aldehyde intermediate. The released aldehyde is then substrate for a Knoevenagel condensation by the hydrolyase poxO followed by an oxidation at the 5-position of the pyrrolidone ring. The presence of the olefin from the amino acid building block allows for migration of the substituted allyl group to occur. This allylic transposition reaction takes place in a conjugate addition, semipinacol-like fashion to yield a succinimide intermediate. Iterative two-electron oxidations of the C7 methyl of the succinimide intermediate to the carboxylic acid can be catalyzed by one of two remaining cytochrome P450 monooxygenasess poxC or poxD to yield oxaleimide A. Subsequent oxidation yields the maleimide scaffold oxaleimide I. Both oxaleimide A and oxaleimide I can undergo oxidative modifications in the decalin ring to yield the series of products oxaleimides B to H. This chain is Hydrolyase poxO, found in Penicillium oxalicum (strain 114-2 / CGMCC 5302) (Penicillium decumbens).